A 162-amino-acid chain; its full sequence is Urease subunit beta (162 aa).

The disordered stretch occupies residues 116–162; it reads WRRSSAAGDAPQELPQVEAAERGRKLDDATDVDTNVGTEEGFEEGRN. Positions 134 to 143 are enriched in basic and acidic residues; it reads AAERGRKLDD.

Belongs to the urease beta subunit family. Heterotrimer of UreA (gamma), UreB (beta) and UreC (alpha) subunits. Three heterotrimers associate to form the active enzyme.

It localises to the cytoplasm. The enzyme catalyses urea + 2 H2O + H(+) = hydrogencarbonate + 2 NH4(+). The protein operates within nitrogen metabolism; urea degradation; CO(2) and NH(3) from urea (urease route): step 1/1. This is Urease subunit beta from Corynebacterium glutamicum (strain ATCC 13032 / DSM 20300 / JCM 1318 / BCRC 11384 / CCUG 27702 / LMG 3730 / NBRC 12168 / NCIMB 10025 / NRRL B-2784 / 534).